A 261-amino-acid polypeptide reads, in one-letter code: SLA class II histocompatibility antigen, DQ haplotype C beta chain (261 aa).

The first 31 residues, 1 to 31 (MSGMVALRLPRGLWTAALTVMLVVLGAPVAE), serve as a signal peptide directing secretion. Residues 32 to 126 (GRDSPQDFVF…IEEGTTLQRR (95 aa)) are beta-1. At 32 to 230 (GRDSPQDFVF…RAQSESAQSK (199 aa)) the chain is on the extracellular side. Intrachain disulfides connect Cys47/Cys111 and Cys149/Cys205. Asn51 is a glycosylation site (N-linked (GlcNAc...) asparagine). Residues 127 to 220 (VQPTVTISPS…SLQNPILVEW (94 aa)) form a beta-2 region. The Ig-like C1-type domain occupies 129-233 (PTVTISPSKA…SESAQSKMLS (105 aa)). Residues 221-230 (RAQSESAQSK) form a connecting peptide region. A helical membrane pass occupies residues 231–251 (MLSGVGGFVLGLIFLGLGLFI). The Cytoplasmic segment spans residues 252-261 (RHRSQKGLVR).

The protein belongs to the MHC class II family.

It localises to the membrane. This is SLA class II histocompatibility antigen, DQ haplotype C beta chain from Sus scrofa (Pig).